Here is a 298-residue protein sequence, read N- to C-terminus: Protease HtpX homolog (298 aa).

Helical transmembrane passes span 14 to 34 (VVLL…AGYL) and 39 to 59 (YAMG…SMIF). Histidine 143 contacts Zn(2+). Glutamate 144 is an active-site residue. Histidine 147 serves as a coordination point for Zn(2+). The next 2 helical transmembrane spans lie at 158 to 178 (IAVA…RMLW) and 197 to 217 (IITL…ASLI). Glutamate 226 serves as a coordination point for Zn(2+).

The protein belongs to the peptidase M48B family. Requires Zn(2+) as cofactor.

The protein resides in the cell membrane. This Streptococcus pyogenes serotype M6 (strain ATCC BAA-946 / MGAS10394) protein is Protease HtpX homolog.